The sequence spans 179 residues: Large ribosomal subunit protein uL5 (179 aa).

It belongs to the universal ribosomal protein uL5 family. Part of the 50S ribosomal subunit; part of the 5S rRNA/L5/L18/L25 subcomplex. Contacts the 5S rRNA and the P site tRNA. Forms a bridge to the 30S subunit in the 70S ribosome.

Functionally, this is one of the proteins that bind and probably mediate the attachment of the 5S RNA into the large ribosomal subunit, where it forms part of the central protuberance. In the 70S ribosome it contacts protein S13 of the 30S subunit (bridge B1b), connecting the 2 subunits; this bridge is implicated in subunit movement. Contacts the P site tRNA; the 5S rRNA and some of its associated proteins might help stabilize positioning of ribosome-bound tRNAs. This Neisseria gonorrhoeae (strain ATCC 700825 / FA 1090) protein is Large ribosomal subunit protein uL5.